The sequence spans 440 residues: Protein ABHD8 (440 aa).

Positions 123 to 158 (DPAGSDGRSAPGSGSGSGSGSGSGGRRRRARRPKRT) are disordered. A compositionally biased stretch (low complexity) spans 124-134 (PAGSDGRSAPG). The span at 135–146 (SGSGSGSGSGSG) shows a compositional bias: gly residues. Residues 147 to 158 (GRRRRARRPKRT) show a composition bias toward basic residues. In terms of domain architecture, AB hydrolase-1 spans 178 to 280 (VLFFIHGVGG…HKVIMINGGG (103 aa)). Catalysis depends on charge relay system residues serine 253, aspartate 371, and histidine 399.

The protein belongs to the AB hydrolase superfamily. In terms of assembly, interacts with NLRP3 (via NACHT and LLR domains); this interaction is enhanced in the presence of NLRP3 inflammasome inducers, such as ATP, nigericin, silica, or alum. Interacts with ZDHHC12.

It localises to the cytoplasm. Negatively regulates NLRP3-driven inflammation. Promotes NLRP3 degradation through the chaperone-mediated autophagy (CMA) pathway, hence attenuating inflammasome activation and IL1B secretion. Acts by recruiting palmitoyltransferase ZDHHC12 to NLRP3, facilitating NLRP3 palmitoylation and subsequent degradation. This chain is Protein ABHD8, found in Macaca fascicularis (Crab-eating macaque).